A 98-amino-acid polypeptide reads, in one-letter code: Cystatin-B (98 aa).

Residue methionine 1 is modified to N-acetylmethionine. A Secondary area of contact motif is present at residues 46–50; it reads QVVAG.

It belongs to the cystatin family. In terms of assembly, able to form dimers stabilized by noncovalent forces.

It localises to the cytoplasm. The protein resides in the nucleus. Functionally, this is an intracellular thiol proteinase inhibitor. Tightly binding reversible inhibitor of cathepsins L, H and B. In Macaca fuscata fuscata (Japanese macaque), this protein is Cystatin-B (CSTB).